Here is an 874-residue protein sequence, read N- to C-terminus: MKAAEIREKFLKFFESKGHTIVRSSSLVPGNDPTLMFTNSGMVQFKDVFLGTDPRPYSRATTAQRSVRAGGKHNDLENVGYTARHHTFFEMLGNFSFGDYFKHDAIKFAWELLTTVYQLPKDKLWVTVYQEDDEAYDIWAKEVGVPTERIIRIGDNKGARYASDNFWTMGDTGPCGPCTEIFYDHGPDVWGGPPGSPEEDGDRYIEIWNLVFMQFNRDAQGNMTRLPKQSVDTGMGLERLAAVLQHVHSNYEIDLFQNLIKAAARVTEISDLTNNSLKVIADHIRACSFLIVDGVIPGNEGRGYVLRRIVRRAIRHGYKLGRKGAFFHKLVADLVAEMGTAYPELKEAEQRVTDVLRQEEERFFETIEHGMSILEAALADVEAKGGKVLDGELAFKLHDTYGFPLDLTADVCRERGMTVDEPAFDDAMARQREQARAAGKFKATQGLEYSGAKTTFHGYEEIAFDDAKVVALYVDGSAVNEVKAGQDAVVVLDHTPFYAESGGQVGDQGVLANAATRFAVADTLKVQADVIGHHGTLEQGTLKVGDVLRAEIDAQRRARTQRNHSATHLMHKALREVLGAHVQQKGSLVDADKTRFDFAHNAPMTDDEIRRVEQIVNDEILANAPGIVRVMPYDEAVKGGAMALFGEKYGDEVRVLDLGFSRELCGGTHVHRTGDIGLFKIVVEGGVAAGIRRVEAITGDNAVRYVQELDARVNEAAAALKAQPSELTQRIAQVQEQVKSLEKELGALKSKLASSQGDELAQQAVEIGGVYVLAATLDGADAKTLRETVDKLKDKLKSAAIVLAAVEGGKVSLIAGVTPDASKKVKAGELVNFVAQQVGGKGGGRPDMAQAGGTEPANLPGALAGVKGWVEERL.

Zn(2+) is bound by residues H564, H568, C665, and H669.

It belongs to the class-II aminoacyl-tRNA synthetase family. Requires Zn(2+) as cofactor.

Its subcellular location is the cytoplasm. It carries out the reaction tRNA(Ala) + L-alanine + ATP = L-alanyl-tRNA(Ala) + AMP + diphosphate. In terms of biological role, catalyzes the attachment of alanine to tRNA(Ala) in a two-step reaction: alanine is first activated by ATP to form Ala-AMP and then transferred to the acceptor end of tRNA(Ala). Also edits incorrectly charged Ser-tRNA(Ala) and Gly-tRNA(Ala) via its editing domain. The sequence is that of Alanine--tRNA ligase from Burkholderia orbicola (strain MC0-3).